The primary structure comprises 63 residues: Large ribosomal subunit protein bL28 (63 aa).

The protein belongs to the bacterial ribosomal protein bL28 family.

The protein is Large ribosomal subunit protein bL28 of Petrotoga mobilis (strain DSM 10674 / SJ95).